A 513-amino-acid polypeptide reads, in one-letter code: ATP synthase subunit alpha (513 aa).

169-176 (GDRQTGKT) is a binding site for ATP.

This sequence belongs to the ATPase alpha/beta chains family. F-type ATPases have 2 components, CF(1) - the catalytic core - and CF(0) - the membrane proton channel. CF(1) has five subunits: alpha(3), beta(3), gamma(1), delta(1), epsilon(1). CF(0) has three main subunits: a(1), b(2) and c(9-12). The alpha and beta chains form an alternating ring which encloses part of the gamma chain. CF(1) is attached to CF(0) by a central stalk formed by the gamma and epsilon chains, while a peripheral stalk is formed by the delta and b chains.

The protein localises to the cell inner membrane. The enzyme catalyses ATP + H2O + 4 H(+)(in) = ADP + phosphate + 5 H(+)(out). In terms of biological role, produces ATP from ADP in the presence of a proton gradient across the membrane. The alpha chain is a regulatory subunit. This Aliivibrio fischeri (strain ATCC 700601 / ES114) (Vibrio fischeri) protein is ATP synthase subunit alpha.